The chain runs to 611 residues: Phosphoenolpyruvate carboxykinase [GTP] (611 aa).

Substrate contacts are provided by residues arginine 82 and tyrosine 222–glycine 224. Positions 231 and 251 each coordinate Mn(2+). Position 273 (serine 273) interacts with substrate. Alanine 274–asparagine 279 serves as a coordination point for GTP. Residue cysteine 275 is part of the active site. Aspartate 298 is a binding site for Mn(2+). Asparagine 389–arginine 391 is a substrate binding site. GTP-binding positions include arginine 391, arginine 422, and phenylalanine 517–asparagine 520.

Belongs to the phosphoenolpyruvate carboxykinase [GTP] family. Monomer. Requires Mn(2+) as cofactor.

The protein resides in the cytoplasm. It catalyses the reaction oxaloacetate + GTP = phosphoenolpyruvate + GDP + CO2. It participates in carbohydrate biosynthesis; gluconeogenesis. Functionally, catalyzes the conversion of oxaloacetate (OAA) to phosphoenolpyruvate (PEP), the rate-limiting step in the metabolic pathway that produces glucose from lactate and other precursors derived from the citric acid cycle. The sequence is that of Phosphoenolpyruvate carboxykinase [GTP] from Arthrobacter sp. (strain FB24).